We begin with the raw amino-acid sequence, 335 residues long: Legumin type B (335 aa).

Disordered regions lie at residues 47-87 (PETQ…GNSV) and 102-155 (TEED…GRNG). Over residues 105 to 118 (DTAKRLRSPRDKRN) the composition is skewed to basic and acidic residues. The span at 135 to 144 (QQEEEEQEEE) shows a compositional bias: acidic residues. The region spanning 167–314 (ENIAQPARAD…AFGLRQRQVT (148 aa)) is the Cupin type-1 domain.

The protein belongs to the 11S seed storage protein (globulins) family. As to quaternary structure, hexamer; each subunit is composed of an acidic and a basic chain derived from a single precursor and linked by a disulfide bond.

In terms of biological role, this protein found in the seeds of many leguminous and non-leguminous plants is the source of sulfur-containing amino acids in seed meals. This Vicia faba (Broad bean) protein is Legumin type B (LEB7).